A 644-amino-acid polypeptide reads, in one-letter code: DNA gyrase subunit B (644 aa).

The Toprim domain maps to Cys-429–Pro-543. Mg(2+) contacts are provided by Glu-435, Asp-508, and Asp-510.

This sequence belongs to the type II topoisomerase GyrB family. Heterotetramer, composed of two GyrA and two GyrB chains. In the heterotetramer, GyrA contains the active site tyrosine that forms a transient covalent intermediate with DNA, while GyrB binds cofactors and catalyzes ATP hydrolysis. The cofactor is Mg(2+). Mn(2+) serves as cofactor. It depends on Ca(2+) as a cofactor.

Its subcellular location is the cytoplasm. The catalysed reaction is ATP-dependent breakage, passage and rejoining of double-stranded DNA.. Its function is as follows. A type II topoisomerase that negatively supercoils closed circular double-stranded (ds) DNA in an ATP-dependent manner to modulate DNA topology and maintain chromosomes in an underwound state. Negative supercoiling favors strand separation, and DNA replication, transcription, recombination and repair, all of which involve strand separation. Also able to catalyze the interconversion of other topological isomers of dsDNA rings, including catenanes and knotted rings. Type II topoisomerases break and join 2 DNA strands simultaneously in an ATP-dependent manner. This is DNA gyrase subunit B from Staphylococcus aureus (strain COL).